A 1240-amino-acid chain; its full sequence is DNA polymerase catalytic subunit (1240 aa).

Residues 1 to 22 are compositionally biased toward low complexity; that stretch reads MFCAAGGPASPGGKPAARAASG. 3 disordered regions span residues 1–44, 646–695, and 1103–1139; these read MFCA…RRQN, GLDK…RETG, and AAAPGDEPAPPAALPSPAKRPRETPSHADPPGGASKP. A compositionally biased stretch (acidic residues) spans 669–688; that stretch reads NGDEDKDDDEDGDEDGDERE.

Belongs to the DNA polymerase type-B family. Forms a complex with the ssDNA-binding protein UL29, the DNA polymerase processivity factor, and the alkaline exonuclease. Interacts with the putative helicase-primase complex subunit UL8; this interaction may coordinate leading and lagging strand DNA synthesis at the replication fork.

The protein localises to the host nucleus. The catalysed reaction is DNA(n) + a 2'-deoxyribonucleoside 5'-triphosphate = DNA(n+1) + diphosphate. It carries out the reaction Endonucleolytic cleavage to 5'-phosphomonoester.. In terms of biological role, replicates viral genomic DNA. The replication complex is composed of six viral proteins: the DNA polymerase, processivity factor, primase, primase-associated factor, helicase, and ssDNA-binding protein. Additionally, the polymerase contains an intrinsic ribonuclease H (RNase H) activity that specifically degrades RNA/DNA heteroduplexes or duplex DNA substrates in the 5' to 3' direction. Therefore, it can catalyze the excision of the RNA primers that initiate the synthesis of Okazaki fragments at a replication fork during viral DNA replication. The polypeptide is DNA polymerase catalytic subunit (Human herpesvirus 2 (strain HG52) (HHV-2)).